Consider the following 122-residue polypeptide: Large ribosomal subunit protein uL14 (122 aa).

It belongs to the universal ribosomal protein uL14 family. Part of the 50S ribosomal subunit. Forms a cluster with proteins L3 and L19. In the 70S ribosome, L14 and L19 interact and together make contacts with the 16S rRNA in bridges B5 and B8.

Functionally, binds to 23S rRNA. Forms part of two intersubunit bridges in the 70S ribosome. This chain is Large ribosomal subunit protein uL14, found in Cellvibrio japonicus (strain Ueda107) (Pseudomonas fluorescens subsp. cellulosa).